The following is a 546-amino-acid chain: MAAKEVKFGDSARKKMLVGVNVLADAVKATLGPKGRNVVLDKSFGAPTITKDGVSVAKEIELKDKFENMGAQLVKDVASKANDEAGDGTTTATVLAQAIVNEGLKAVAAGMNPMDLKRGIDKATIAIVAELKSLAKPCSDSKAIAQVGTISANSDESIGNIIAEAMNKVGKEGVITVEEGSGLENELSVVEGMQFDRGYLSPYFINKPDTMVAELDNPLLLLVDKKISNIRELLPVLEAVAKSGRPLLIVAEDVEGEALATLVVNNMRGIVKVAAVKAPGFNDRRKAMLQVIAILTGATVISEKVGLSLESATLEHLGKPKALVLNKENTTIMHGAGAQADIEAAVAQIRKQIEETSSDYDREKLQERLAKLAGGVAVIKVGAATEVEMKEKKARVEAALHATRAAVEEGVVPGGGVALVRALQAIEGLKGDNEDQNVGIALLRRAVEAPLRQIVANAGDEPSVVVDKVKQGSGNFGFNAASGVYGDMIEMGILDPAKVTRSALQAASSIGGLMITTEAMVADIVEDKAAPAMPDMGGMGGMGGMM.

ATP-binding positions include 30 to 33 (TLGP), Lys-51, 87 to 91 (DGTTT), Gly-415, 479 to 481 (NAA), and Asp-495.

This sequence belongs to the chaperonin (HSP60) family. In terms of assembly, forms a cylinder of 14 subunits composed of two heptameric rings stacked back-to-back. Interacts with the co-chaperonin GroES.

The protein resides in the cytoplasm. It catalyses the reaction ATP + H2O + a folded polypeptide = ADP + phosphate + an unfolded polypeptide.. Its function is as follows. Together with its co-chaperonin GroES, plays an essential role in assisting protein folding. The GroEL-GroES system forms a nano-cage that allows encapsulation of the non-native substrate proteins and provides a physical environment optimized to promote and accelerate protein folding. This is Chaperonin GroEL from Azotobacter vinelandii.